Consider the following 423-residue polypeptide: TNF receptor-associated factor family protein DDB_G0277243 (423 aa).

The segment at 20–66 (CSICVDPVLNSLPLEQHQALSCKNGHLLCQACWGKQLALRKECCICK) adopts an RING-type; degenerate zinc-finger fold. TRAF-type zinc fingers lie at residues 124 to 179 (SHLR…NDMP) and 180 to 237 (THIE…CYLS). One can recognise an MATH domain in the interval 287–411 (RYKGNWTIEN…DGKLTINIDV (125 aa)).

This sequence belongs to the TNF receptor-associated factor family. A subfamily.

It localises to the cytoplasm. Probable adapter protein and signal transducer that links members of the tumor necrosis factor receptor family to different signaling pathways by association with the receptor cytoplasmic domain and kinases. In Dictyostelium discoideum (Social amoeba), this protein is TNF receptor-associated factor family protein DDB_G0277243.